The sequence spans 352 residues: Selenide, water dikinase (352 aa).

Cysteine 23 is a catalytic residue. ATP is bound by residues lysine 26 and 54 to 56 (SRD). Aspartate 57 is a Mg(2+) binding site. ATP-binding positions include aspartate 74, aspartate 97, and 145–147 (GHS). Residue aspartate 97 participates in Mg(2+) binding. Aspartate 233 lines the Mg(2+) pocket.

This sequence belongs to the selenophosphate synthase 1 family. Class I subfamily. As to quaternary structure, homodimer. Requires Mg(2+) as cofactor.

The enzyme catalyses hydrogenselenide + ATP + H2O = selenophosphate + AMP + phosphate + 2 H(+). Functionally, synthesizes selenophosphate from selenide and ATP. In Shewanella sp. (strain MR-7), this protein is Selenide, water dikinase.